A 263-amino-acid chain; its full sequence is L-histidine 2-aminobutanoyltransferase (263 aa).

It belongs to the methyltransferase superfamily. CntL family.

It catalyses the reaction L-histidine + S-adenosyl-L-methionine = (2S)-2-amino-4-{[(1S)-1-carboxy-2-(1H-imidazol-4-yl)ethyl]amino}butanoate + S-methyl-5'-thioadenosine + H(+). In terms of biological role, catalyzes the nucleophilic attack of one alpha-aminobutanoate moiety from SAM onto L-histidine to produce the intermediate (2S)-2-amino-4-{[(1S)-1-carboxy-2-(1H-imidazol-4-yl)ethyl]amino}butanoate. Functions in the biosynthesis of the metallophore pseudopaline, which is involved in the acquisition of nickel and zinc, and thus enables bacterial growth inside the host, where metal access is limited. Therefore, this enzyme probably contributes to Pseudomonas virulence. Appears to be specific for L-histidine as substrate. This chain is L-histidine 2-aminobutanoyltransferase, found in Pseudomonas aeruginosa (strain ATCC 15692 / DSM 22644 / CIP 104116 / JCM 14847 / LMG 12228 / 1C / PRS 101 / PAO1).